Consider the following 331-residue polypeptide: MLIDKLMKNTREIVTLEDAQKLDQKAGVKSYIGIEPSGIPHVATAVMWPRKLAELQDDIKIYVLLADWHAMINNKLHGDLDLIRKGGELLKRSFMAEGLTKAEYLWASQLVSSSNYWEMFIKTAKRSTLKRLTRALPIMGRTEADAEKDFSMYIYPIMQVTDIFYLDVDIAFGGMDQRHAHMLARDIADKMKVKKAVSVHGYLLSSLKGNTRMDNFVKMSKSDPNSAILINDEYKDIERKVNAAFCPPEKVDGNPLAEIMKYVLIPYYGRDIIIEKPSGNVRIENVDQFQNDYISGKIAPTELKKAMIPILDEMIEPARKVAYDMDLSIFS.

Tyrosine 31, tyrosine 155, glutamine 159, aspartate 162, and glutamine 177 together coordinate L-tyrosine. A 'KMSKS' region motif is present at residues 218–222 (KMSKS). Residue lysine 221 participates in ATP binding.

It belongs to the class-I aminoacyl-tRNA synthetase family. TyrS type 4 subfamily. Homodimer.

The protein localises to the cytoplasm. The catalysed reaction is tRNA(Tyr) + L-tyrosine + ATP = L-tyrosyl-tRNA(Tyr) + AMP + diphosphate + H(+). Its function is as follows. Catalyzes the attachment of tyrosine to tRNA(Tyr) in a two-step reaction: tyrosine is first activated by ATP to form Tyr-AMP and then transferred to the acceptor end of tRNA(Tyr). This chain is Tyrosine--tRNA ligase, found in Thermoplasma volcanium (strain ATCC 51530 / DSM 4299 / JCM 9571 / NBRC 15438 / GSS1).